The following is a 111-amino-acid chain: Large ribosomal subunit protein uL23 (111 aa).

This sequence belongs to the universal ribosomal protein uL23 family. As to quaternary structure, part of the 50S ribosomal subunit. Contacts protein L29, and trigger factor when it is bound to the ribosome.

Its function is as follows. One of the early assembly proteins it binds 23S rRNA. One of the proteins that surrounds the polypeptide exit tunnel on the outside of the ribosome. Forms the main docking site for trigger factor binding to the ribosome. The protein is Large ribosomal subunit protein uL23 of Chlamydia muridarum (strain MoPn / Nigg).